The primary structure comprises 133 residues: Glycophorin-A (133 aa).

O-linked (GalNAc...) threonine glycans are attached at residues Thr-1 and Thr-6. The interval 1-34 is disordered; the sequence is TETPVTGEQGSATPGNVSNATVTAGKPSATSPGV. Over 1-62 the chain is Extracellular; sequence TETPVTGEQG…SYHQDFSHAE (62 aa). O-linked (GalNAc...) serine glycosylation is present at Ser-11. Thr-13 carries O-linked (GalNAc...) threonine glycosylation. An N-linked (GlcNAc...) asparagine glycan is attached at Asn-19. O-linked (GalNAc...) threonine glycans are attached at residues Thr-21, Thr-23, and Thr-30. A glycan (O-linked (GalNAc...) serine) is linked at Ser-31. Asn-39 carries an N-linked (GlcNAc...) asparagine glycan. O-linked (GalNAc...) threonine glycosylation is found at Thr-41 and Thr-48. A helical transmembrane segment spans residues 63 to 85; it reads ITGIIFAVMAGLLLIIFLIAYLI. At 86–133 the chain is on the cytoplasmic side; sequence RRMIKKPLPVPKPQDSPDIGTENTADPSELQDTEDPPLTSVEIETPAS. The segment at 93-133 is disordered; sequence LPVPKPQDSPDIGTENTADPSELQDTEDPPLTSVEIETPAS.

Belongs to the glycophorin-A family. In terms of assembly, homodimer. Component of the ankyrin-1 complex in the erythrocyte, composed of ANK1, RHCE, RHAG, SLC4A1, EPB42, GYPA, GYPB and AQP1. Interacts with SLC4A1; a GYPA monomer is bound at each end of the SLC4A1 dimer forming a heterotetramer.

The protein resides in the membrane. In terms of biological role, component of the ankyrin-1 complex, a multiprotein complex involved in the stability and shape of the erythrocyte membrane. Glycophorin A is the major intrinsic membrane protein of the erythrocyte. The N-terminal glycosylated segment, which lies outside the erythrocyte membrane, has MN blood group receptors. Appears to be important for the function of SLC4A1 and is required for high activity of SLC4A1. May be involved in translocation of SLC4A1 to the plasma membrane. The protein is Glycophorin-A of Sus scrofa (Pig).